The primary structure comprises 761 residues: Zinc finger protein 287 (761 aa).

The SCAN box domain maps to 49-131 (RQNFRNFPYP…TLVEDLTQIL (83 aa)). Residues 134 to 154 (EAPQNSTLSQDTPEEDPRGKH) are disordered. Residues 170-238 (MTFKDVAVDI…IKEILEGPSP (69 aa)) enclose the KRAB domain. C2H2-type zinc fingers lie at residues 368-390 (YKCN…QSTH), 396-418 (YECE…QRMH), 424-446 (YECH…QRIH), 452-474 (YKCD…QRTH), 480-502 (YKCL…QRVH), 508-530 (YICN…QKIH), 536-558 (YKCN…QRIH), 564-586 (YKCN…QTTH), 592-614 (YICN…HRTH), 620-642 (YKCS…QRIH), 648-670 (FKCN…QRIH), 676-698 (YKCN…QRTH), 704-726 (YKCN…QRIH), and 732-754 (YACR…QRVH).

The protein belongs to the krueppel C2H2-type zinc-finger protein family.

Its subcellular location is the nucleus. Functionally, may be involved in transcriptional regulation. This is Zinc finger protein 287 from Homo sapiens (Human).